The following is a 219-amino-acid chain: Adenylate kinase (219 aa).

Residue 10–15 (GAGKGT) coordinates ATP. The segment at 30–59 (STGDMLRAAVKAETPVGLEAKKVMDAGQLV) is NMP. AMP is bound by residues T31, R36, 57 to 59 (QLV), 85 to 88 (GFPR), and Q92. The segment at 122-159 (GRRVHLSSGRTYHVLFNPPKQEGLDDETGEPLVQRADD) is LID. Residues R123 and 132–133 (TY) each bind ATP. Residues R156 and R167 each coordinate AMP. G203 serves as a coordination point for ATP.

The protein belongs to the adenylate kinase family. Monomer.

It is found in the cytoplasm. The enzyme catalyses AMP + ATP = 2 ADP. It participates in purine metabolism; AMP biosynthesis via salvage pathway; AMP from ADP: step 1/1. Functionally, catalyzes the reversible transfer of the terminal phosphate group between ATP and AMP. Plays an important role in cellular energy homeostasis and in adenine nucleotide metabolism. The polypeptide is Adenylate kinase (Chlorobium limicola (strain DSM 245 / NBRC 103803 / 6330)).